Here is a 371-residue protein sequence, read N- to C-terminus: Chaperone protein DnaJ (371 aa).

One can recognise a J domain in the interval 5–70 (CYYEILNVSK…SKRSRYDQFG (66 aa)). A CR-type zinc finger spans residues 127–204 (GVEKEITIPR…CYGNGKVKKQ (78 aa)). Zn(2+) contacts are provided by cysteine 140, cysteine 143, cysteine 156, cysteine 159, cysteine 178, cysteine 181, cysteine 192, and cysteine 195. CXXCXGXG motif repeat units lie at residues 140 to 147 (CDSCDGTG), 156 to 163 (CHACHGQG), 178 to 185 (CPVCNGTG), and 192 to 199 (CDACYGNG).

This sequence belongs to the DnaJ family. As to quaternary structure, homodimer. The cofactor is Zn(2+).

Its subcellular location is the cytoplasm. Functionally, participates actively in the response to hyperosmotic and heat shock by preventing the aggregation of stress-denatured proteins and by disaggregating proteins, also in an autonomous, DnaK-independent fashion. Unfolded proteins bind initially to DnaJ; upon interaction with the DnaJ-bound protein, DnaK hydrolyzes its bound ATP, resulting in the formation of a stable complex. GrpE releases ADP from DnaK; ATP binding to DnaK triggers the release of the substrate protein, thus completing the reaction cycle. Several rounds of ATP-dependent interactions between DnaJ, DnaK and GrpE are required for fully efficient folding. Also involved, together with DnaK and GrpE, in the DNA replication of plasmids through activation of initiation proteins. This Francisella tularensis subsp. tularensis (strain WY96-3418) protein is Chaperone protein DnaJ.